Reading from the N-terminus, the 279-residue chain is 3-methyl-2-oxobutanoate hydroxymethyltransferase (279 aa).

Mg(2+) contacts are provided by aspartate 43 and aspartate 82. 3-methyl-2-oxobutanoate-binding positions include 43-44 (DS), aspartate 82, and lysine 112. Mg(2+) is bound at residue glutamate 114. The active-site Proton acceptor is glutamate 181.

The protein belongs to the PanB family. As to quaternary structure, homodecamer; pentamer of dimers. The cofactor is Mg(2+).

The protein resides in the cytoplasm. It catalyses the reaction 3-methyl-2-oxobutanoate + (6R)-5,10-methylene-5,6,7,8-tetrahydrofolate + H2O = 2-dehydropantoate + (6S)-5,6,7,8-tetrahydrofolate. The protein operates within cofactor biosynthesis; (R)-pantothenate biosynthesis; (R)-pantoate from 3-methyl-2-oxobutanoate: step 1/2. Functionally, catalyzes the reversible reaction in which hydroxymethyl group from 5,10-methylenetetrahydrofolate is transferred onto alpha-ketoisovalerate to form ketopantoate. This is 3-methyl-2-oxobutanoate hydroxymethyltransferase from Geobacillus sp. (strain WCH70).